Here is a 294-residue protein sequence, read N- to C-terminus: Nucleotide-binding protein DICTH_1001 (294 aa).

Residue 10–17 (GLSGAGKS) coordinates ATP. 61 to 64 (DIRT) is a binding site for GTP.

The protein belongs to the RapZ-like family.

In terms of biological role, displays ATPase and GTPase activities. The sequence is that of Nucleotide-binding protein DICTH_1001 from Dictyoglomus thermophilum (strain ATCC 35947 / DSM 3960 / H-6-12).